Reading from the N-terminus, the 246-residue chain is TATA-box-binding protein (246 aa).

The interval 1-27 (MSSDKTSQQTFKLAPNNSVAQSNSIDQ) is disordered. 2 tandem repeats follow at residues 53–129 (LQNI…AKII) and 143–220 (IQNI…YWVL).

This sequence belongs to the TBP family. Belongs to the TFIID complex together with the TBP-associated factors (TAFs). Binds DNA as monomer.

It is found in the nucleus. Its function is as follows. General transcription factor that functions at the core of the DNA-binding multiprotein factor TFIID. Binding of TFIID to the TATA box is the initial transcriptional step of the pre-initiation complex (PIC), playing a role in the activation of eukaryotic genes transcribed by RNA polymerase II. The polypeptide is TATA-box-binding protein (Tetrahymena thermophila).